The following is a 132-amino-acid chain: uncharacterized protein (132 aa).

An N-terminal signal peptide occupies residues 1–18; it reads MRKIISMLFIPLFIFAMA.

This is an uncharacterized protein from Aquifex aeolicus (strain VF5).